The primary structure comprises 591 residues: Aspartate--tRNA(Asp/Asn) ligase (591 aa).

L-aspartate is bound at residue Glu-174. The tract at residues 198-201 is aspartate; sequence QLFK. Arg-220 provides a ligand contact to L-aspartate. ATP is bound by residues 220–222 and Gln-229; that span reads RDE. His-450 contributes to the L-aspartate binding site. Glu-483 serves as a coordination point for ATP. Position 490 (Arg-490) interacts with L-aspartate. 535–538 contacts ATP; sequence GLDR.

It belongs to the class-II aminoacyl-tRNA synthetase family. Type 1 subfamily. Homodimer.

The protein resides in the cytoplasm. The enzyme catalyses tRNA(Asx) + L-aspartate + ATP = L-aspartyl-tRNA(Asx) + AMP + diphosphate. Aspartyl-tRNA synthetase with relaxed tRNA specificity since it is able to aspartylate not only its cognate tRNA(Asp) but also tRNA(Asn). Reaction proceeds in two steps: L-aspartate is first activated by ATP to form Asp-AMP and then transferred to the acceptor end of tRNA(Asp/Asn). This chain is Aspartate--tRNA(Asp/Asn) ligase, found in Pseudomonas aeruginosa (strain LESB58).